Here is a 307-residue protein sequence, read N- to C-terminus: RHOMBOID-like protein 6, mitochondrial (307 aa).

The transit peptide at 1–62 directs the protein to the mitochondrion; sequence MRSRDMERGR…DCVAKLLRRF (62 aa). The next 6 membrane-spanning stretches (helical) occupy residues 105–125, 136–156, 159–179, 191–211, 214–234, and 262–282; these read WLHA…IFGI, IGLI…LFLQ, ISVG…SELL, ALLS…LPWV, FAHI…LMQP, and LFFV…VMLF. The Nucleophile role is filled by S164. H216 serves as the catalytic Charge relay system.

The protein belongs to the peptidase S54 family.

The protein localises to the mitochondrion membrane. It catalyses the reaction Cleaves type-1 transmembrane domains using a catalytic dyad composed of serine and histidine that are contributed by different transmembrane domains.. Its function is as follows. Probable rhomboid-type serine protease that catalyzes intramembrane proteolysis. Might be involved in response to abiotic stimuli. This chain is RHOMBOID-like protein 6, mitochondrial, found in Arabidopsis thaliana (Mouse-ear cress).